Reading from the N-terminus, the 115-residue chain is Fluoride-specific ion channel FluC 4 (115 aa).

2 helical membrane-spanning segments follow: residues 19-39 (WGTF…AGLG) and 42-62 (LGGI…LLGG). Na(+) contacts are provided by Gly-61 and Thr-64. Residues 89–109 (IVASALLCVLAVAAGYGGIMW) form a helical membrane-spanning segment.

It belongs to the fluoride channel Fluc/FEX (TC 1.A.43) family.

The protein localises to the cell inner membrane. It catalyses the reaction fluoride(in) = fluoride(out). Na(+) is not transported, but it plays an essential structural role and its presence is essential for fluoride channel function. Fluoride-specific ion channel. Important for reducing fluoride concentration in the cell, thus reducing its toxicity. The polypeptide is Fluoride-specific ion channel FluC 4 (Brucella melitensis biotype 1 (strain ATCC 23456 / CCUG 17765 / NCTC 10094 / 16M)).